Here is an 83-residue protein sequence, read N- to C-terminus: Arminin 3b (83 aa).

A signal peptide spans 1–18 (MKIVFAILFLTFIALTYA). A propeptide spanning residues 19-57 (RSFEDLKEEIKNEIEKEIFDDLEEESDELDNNVKKFNDA) is cleaved from the precursor. Ser-80 carries the serine amide modification.

Belongs to the arminin family. Expressed in entodermal epithelium along the body column.

The protein localises to the secreted. It is found in the target cell membrane. Antimicrobial peptide with a broad-spectrum antimicrobial activity. Keeps its antibacterial activity under a wide range of salt concentrations that mimic physiological conditions of human blood, which is surprising, since Hydra is an obligate freshwater animal with nearly no salt tolerance. Does not affect red blood cells. This is Arminin 3b from Hydra vulgaris (Hydra).